A 167-amino-acid polypeptide reads, in one-letter code: NAD(P)H-quinone oxidoreductase subunit I, chloroplastic (167 aa).

4Fe-4S ferredoxin-type domains lie at 55–84 (GRIHFEFDKCIACEVCVRVCPIDLPVVDWK) and 95–124 (LNYSIDFGICIFCGNCVEYCPTNCLSMTEE). [4Fe-4S] cluster is bound by residues cysteine 64, cysteine 67, cysteine 70, cysteine 74, cysteine 104, cysteine 107, cysteine 110, and cysteine 114.

It belongs to the complex I 23 kDa subunit family. As to quaternary structure, NDH is composed of at least 16 different subunits, 5 of which are encoded in the nucleus. Requires [4Fe-4S] cluster as cofactor.

It is found in the plastid. The protein localises to the chloroplast thylakoid membrane. It catalyses the reaction a plastoquinone + NADH + (n+1) H(+)(in) = a plastoquinol + NAD(+) + n H(+)(out). The enzyme catalyses a plastoquinone + NADPH + (n+1) H(+)(in) = a plastoquinol + NADP(+) + n H(+)(out). Its function is as follows. NDH shuttles electrons from NAD(P)H:plastoquinone, via FMN and iron-sulfur (Fe-S) centers, to quinones in the photosynthetic chain and possibly in a chloroplast respiratory chain. The immediate electron acceptor for the enzyme in this species is believed to be plastoquinone. Couples the redox reaction to proton translocation, and thus conserves the redox energy in a proton gradient. The chain is NAD(P)H-quinone oxidoreductase subunit I, chloroplastic from Jasminum nudiflorum (Winter jasmine).